The sequence spans 643 residues: Pesticidal crystal protein Cry11Aa (643 aa).

Belongs to the delta endotoxin family.

Functionally, promotes colloidosmotic lysis by binding to the midgut epithelial cells of mosquitos. The protein is Pesticidal crystal protein Cry11Aa (cry11Aa) of Bacillus thuringiensis subsp. israelensis.